The primary structure comprises 439 residues: Na(+)/H(+) antiporter NhaA (439 aa).

The next 11 membrane-spanning stretches (helical) occupy residues 12–32, 67–87, 103–123, 133–153, 162–182, 186–206, 214–234, 314–334, 341–361, 379–399, and 412–432; these read SMNIAASILLFVAAIAAAIIA, MIEFINDGLMTIFFLLVGLEI, ALPFIAACGGMLFPVIVYMSI, GLAIPMATDIAFSLGVLSLLG, IFLTAFAVVDDIGGILVIALF, HVSYGYILIAALLYVLLYFIG, IFFLVIGVVIWYLFLQSGIHS, ILPLFAFVNAGVVFSGGGELV, VAAGLLFGKFAGIYFFTWLAI, GIALLGGIGFTVSLFIANLSF, and FGVLSGTILSGLLGYIVLRIV.

The protein belongs to the NhaA Na(+)/H(+) (TC 2.A.33) antiporter family.

The protein localises to the cell inner membrane. The catalysed reaction is Na(+)(in) + 2 H(+)(out) = Na(+)(out) + 2 H(+)(in). Na(+)/H(+) antiporter that extrudes sodium in exchange for external protons. This Bacteroides thetaiotaomicron (strain ATCC 29148 / DSM 2079 / JCM 5827 / CCUG 10774 / NCTC 10582 / VPI-5482 / E50) protein is Na(+)/H(+) antiporter NhaA.